A 322-amino-acid chain; its full sequence is tRNA U34 carboxymethyltransferase (322 aa).

Carboxy-S-adenosyl-L-methionine-binding residues include K91, W105, K110, G129, M195, Y199, and R314.

Belongs to the class I-like SAM-binding methyltransferase superfamily. CmoB family. In terms of assembly, homotetramer.

The catalysed reaction is carboxy-S-adenosyl-L-methionine + 5-hydroxyuridine(34) in tRNA = 5-carboxymethoxyuridine(34) in tRNA + S-adenosyl-L-homocysteine + H(+). Catalyzes carboxymethyl transfer from carboxy-S-adenosyl-L-methionine (Cx-SAM) to 5-hydroxyuridine (ho5U) to form 5-carboxymethoxyuridine (cmo5U) at position 34 in tRNAs. The polypeptide is tRNA U34 carboxymethyltransferase (Ectopseudomonas mendocina (strain ymp) (Pseudomonas mendocina)).